A 298-amino-acid chain; its full sequence is Ribosomal RNA small subunit methyltransferase A (298 aa).

S-adenosyl-L-methionine-binding residues include Asn-30, Val-32, Gly-57, Glu-78, Asp-108, and Asn-126.

This sequence belongs to the class I-like SAM-binding methyltransferase superfamily. rRNA adenine N(6)-methyltransferase family. RsmA subfamily.

The protein resides in the cytoplasm. The enzyme catalyses adenosine(1518)/adenosine(1519) in 16S rRNA + 4 S-adenosyl-L-methionine = N(6)-dimethyladenosine(1518)/N(6)-dimethyladenosine(1519) in 16S rRNA + 4 S-adenosyl-L-homocysteine + 4 H(+). Specifically dimethylates two adjacent adenosines (A1518 and A1519) in the loop of a conserved hairpin near the 3'-end of 16S rRNA in the 30S particle. May play a critical role in biogenesis of 30S subunits. In Cutibacterium acnes (strain DSM 16379 / KPA171202) (Propionibacterium acnes), this protein is Ribosomal RNA small subunit methyltransferase A.